The sequence spans 356 residues: tRNA N6-adenosine threonylcarbamoyltransferase (356 aa).

His-111 and His-115 together coordinate Fe cation. Residues 143 to 147 (LASGG), Asp-178, Gly-191, Asp-195, and Asn-286 contribute to the substrate site. Asp-314 is a Fe cation binding site.

The protein belongs to the KAE1 / TsaD family. Fe(2+) is required as a cofactor.

It localises to the cytoplasm. The enzyme catalyses L-threonylcarbamoyladenylate + adenosine(37) in tRNA = N(6)-L-threonylcarbamoyladenosine(37) in tRNA + AMP + H(+). Its function is as follows. Required for the formation of a threonylcarbamoyl group on adenosine at position 37 (t(6)A37) in tRNAs that read codons beginning with adenine. Is involved in the transfer of the threonylcarbamoyl moiety of threonylcarbamoyl-AMP (TC-AMP) to the N6 group of A37, together with TsaE and TsaB. TsaD likely plays a direct catalytic role in this reaction. The polypeptide is tRNA N6-adenosine threonylcarbamoyltransferase (Sorangium cellulosum (strain So ce56) (Polyangium cellulosum (strain So ce56))).